The chain runs to 721 residues: Glucans biosynthesis glucosyltransferase H (721 aa).

The next 7 helical transmembrane spans lie at 54–74 (LIMVATAVLSAAGIYEMYQVL), 85–105 (VVLVLFAALFAWVALSFVSAL), 404–424 (GIGAYLTAPMWLAFLVAGILI), 458–478 (FAGTMGLLILPKLLALLLVLI), 493–513 (FGGVLLETMISALTAPVMMVF), 548–568 (YALPTALGATMAVGAWLVSWP), and 569–589 (LLLWMTPVIVGLLLAIPVALL).

This sequence belongs to the glycosyltransferase 2 family. OpgH subfamily.

The protein resides in the cell inner membrane. Its pathway is glycan metabolism; osmoregulated periplasmic glucan (OPG) biosynthesis. Functionally, involved in the biosynthesis of osmoregulated periplasmic glucans (OPGs). The polypeptide is Glucans biosynthesis glucosyltransferase H (Rhodopseudomonas palustris (strain TIE-1)).